Reading from the N-terminus, the 316-residue chain is 4-hydroxy-3-methylbut-2-enyl diphosphate reductase (316 aa).

Cys-12 serves as a coordination point for [4Fe-4S] cluster. 2 residues coordinate (2E)-4-hydroxy-3-methylbut-2-enyl diphosphate: His-41 and His-74. Positions 41 and 74 each coordinate dimethylallyl diphosphate. His-41 and His-74 together coordinate isopentenyl diphosphate. Position 96 (Cys-96) interacts with [4Fe-4S] cluster. His-124 is a binding site for (2E)-4-hydroxy-3-methylbut-2-enyl diphosphate. His-124 provides a ligand contact to dimethylallyl diphosphate. Position 124 (His-124) interacts with isopentenyl diphosphate. The active-site Proton donor is Glu-126. Thr-167 is a binding site for (2E)-4-hydroxy-3-methylbut-2-enyl diphosphate. [4Fe-4S] cluster is bound at residue Cys-197. (2E)-4-hydroxy-3-methylbut-2-enyl diphosphate is bound by residues Ser-225, Ser-226, Asn-227, and Ser-269. Dimethylallyl diphosphate contacts are provided by Ser-225, Ser-226, Asn-227, and Ser-269. 4 residues coordinate isopentenyl diphosphate: Ser-225, Ser-226, Asn-227, and Ser-269.

Belongs to the IspH family. As to quaternary structure, homodimer. [4Fe-4S] cluster is required as a cofactor.

It carries out the reaction isopentenyl diphosphate + 2 oxidized [2Fe-2S]-[ferredoxin] + H2O = (2E)-4-hydroxy-3-methylbut-2-enyl diphosphate + 2 reduced [2Fe-2S]-[ferredoxin] + 2 H(+). It catalyses the reaction dimethylallyl diphosphate + 2 oxidized [2Fe-2S]-[ferredoxin] + H2O = (2E)-4-hydroxy-3-methylbut-2-enyl diphosphate + 2 reduced [2Fe-2S]-[ferredoxin] + 2 H(+). The protein operates within isoprenoid biosynthesis; dimethylallyl diphosphate biosynthesis; dimethylallyl diphosphate from (2E)-4-hydroxy-3-methylbutenyl diphosphate: step 1/1. It participates in isoprenoid biosynthesis; isopentenyl diphosphate biosynthesis via DXP pathway; isopentenyl diphosphate from 1-deoxy-D-xylulose 5-phosphate: step 6/6. Its function is as follows. Catalyzes the conversion of 1-hydroxy-2-methyl-2-(E)-butenyl 4-diphosphate (HMBPP) into a mixture of isopentenyl diphosphate (IPP) and dimethylallyl diphosphate (DMAPP). Acts in the terminal step of the DOXP/MEP pathway for isoprenoid precursor biosynthesis. This Enterobacter sp. (strain 638) protein is 4-hydroxy-3-methylbut-2-enyl diphosphate reductase.